Reading from the N-terminus, the 192-residue chain is Large ribosomal subunit protein bL25 (192 aa).

Belongs to the bacterial ribosomal protein bL25 family. CTC subfamily. In terms of assembly, part of the 50S ribosomal subunit; part of the 5S rRNA/L5/L18/L25 subcomplex. Contacts the 5S rRNA. Binds to the 5S rRNA independently of L5 and L18.

Functionally, this is one of the proteins that binds to the 5S RNA in the ribosome where it forms part of the central protuberance. The protein is Large ribosomal subunit protein bL25 of Porphyromonas gingivalis (strain ATCC 33277 / DSM 20709 / CIP 103683 / JCM 12257 / NCTC 11834 / 2561).